The primary structure comprises 1033 residues: Complement receptor type 2 (1033 aa).

The first 20 residues, Met1–Gly20, serve as a signal peptide directing secretion. 15 consecutive Sushi domains span residues Ile21 to Tyr84, Ser89 to Ser148, Leu152 to Glu212, Ala213 to Glu273, Ile274 to Leu344, Val349 to Lys408, Glu409 to Val468, Ala469 to Glu524, Ile525 to Leu595, Val600 to Lys659, Glu660 to Val716, Ile717 to Arg781, Thr786 to Lys845, Ile849 to Glu909, and Val910 to Ser970. At Ile21–Arg971 the chain is on the extracellular side. Intrachain disulfides connect Cys23-Cys65, Cys51-Cys82, Cys91-Cys132, Cys118-Cys146, Cys154-Cys197, Cys183-Cys210, Cys215-Cys256, Cys242-Cys271, Cys276-Cys325, Cys305-Cys342, Cys351-Cys393, Cys379-Cys406, Cys410-Cys453, Cys439-Cys466, Cys471-Cys509, Cys495-Cys522, Cys527-Cys576, Cys556-Cys593, Cys602-Cys644, Cys630-Cys657, Cys662-Cys699, Cys685-Cys714, Cys719-Cys762, Cys748-Cys779, Cys788-Cys830, Cys816-Cys843, Cys851-Cys894, and Cys880-Cys907. Asn121 and Asn127 each carry an N-linked (GlcNAc...) asparagine glycan. Residue Asn294 is glycosylated (N-linked (GlcNAc...) asparagine). N-linked (GlcNAc...) asparagine glycosylation is present at Asn372. Residue Asn492 is glycosylated (N-linked (GlcNAc...) asparagine). An N-linked (GlcNAc...) asparagine glycan is attached at Asn623. N-linked (GlcNAc...) asparagine glycosylation is present at Asn682. N-linked (GlcNAc...) asparagine glycans are attached at residues Asn800, Asn823, and Asn861. Asn911 carries N-linked (GlcNAc...) asparagine glycosylation. Disulfide bonds link Cys912–Cys955 and Cys941–Cys968. The chain crosses the membrane as a helical span at residues Ser972–Ser999. The Cytoplasmic portion of the chain corresponds to Lys1000 to Ser1033.

The protein belongs to the receptors of complement activation (RCA) family. In terms of assembly, interacts (via Sushi domain 1 and 2) with C3. Interacts with CD19. Part of a complex composed of CD19, CR2/CD21, CD81 and IFITM1/CD225 in the membrane of mature B-cells. Interacts (via Sushi domain 1 and 2) with FCER2 (via the C-terminus). Interacts with CD23. Interacts with FCRL5. Interacts with CR1. Interacts with INFNA1. As to quaternary structure, (Microbial infection) Interacts with Epstein-Barr virus gp350 protein. As to expression, mature B-lymphocytes, T-lymphocytes, pharyngeal epithelial cells, astrocytes and follicular dendritic cells of the spleen.

It is found in the cell membrane. Its function is as follows. Serves as a receptor for various ligands including complement component CD3d, HNRNPU OR IFNA1. When C3d is bound to antigens, attaches to C3d on B-cell surface and thereby facilitates the recognition and uptake of antigens by B-cells. This interaction enhances B-cell activation and subsequent immune responses. Forms a complex with several partners on the surface of B-cells including CD19, FCRL5 and CD81, to form the B-cell coreceptor complex that plays a crucial role in B-cell activation and signaling. Also induces specific intracellular signaling separately from the BCR and CD19 by activating the tyrosine kinase SRC, which then phosphorylates nucleolin/NCL and triggers AKT and GSK3 kinase activities in a SYK/CD19-independent manner. Acts as a ligand for CD23 (FcepsilonRII), a low-affinity receptor for IgE, which is expressed on B-cells and other immune cells, and thus participates in the regulation of IgE production. Functionally, (Microbial infection) Acts as a receptor for Epstein-Barr virus. The polypeptide is Complement receptor type 2 (CR2) (Homo sapiens (Human)).